A 147-amino-acid polypeptide reads, in one-letter code: MGTPASVVSEPPPWQAPTEARGRKQASANIFQDAELLQIQGLFQRSGDQLAEERAQIIWECAGDHHVAEALKRLRRKRPPRQKPLGHSLHHCSRLRILEPHSPLADPQSATETASTEQYLHSRRKSARIRRNWKKPGPTSYLHQIRH.

Disordered stretches follow at residues 1-27 and 99-147; these read MGTP…KQAS and EPHS…QIRH. A compositionally biased stretch (polar residues) spans 108–119; sequence QSATETASTEQY. A compositionally biased stretch (basic residues) spans 121 to 134; the sequence is HSRRKSARIRRNWK.

Functionally, may be involved in MAP kinase activation, epithelial sodium channel (ENaC) down-regulation and cell cycling. This is Arginine vasopressin-induced protein 1 (AVPI1) from Pongo abelii (Sumatran orangutan).